The sequence spans 404 residues: WD repeat and SOCS box-containing protein 2 (404 aa).

7 WD repeats span residues 16-55 (GRPHQFDWKSSCETWSVAFSPDGSWFAWSQGHCIVKLIPW), 81-140 (GSPK…IWEV), 144-183 (LLLLNLSGHQDVVRDLSFTPSGSLILVSASRDKTLRIWDL), 188-226 (KQIQVLSGHLQWVYCCSISPDCSMLCSAAGEKSVFLWSM), 230-268 (TLIRKLEGHQSSVVSCDFSPDSALLVTASYDTNVIMWDP), 283-322 (DPAMDDSDVHISSLRSVCFSPEGLYLATVADDRLLRIWAL), and 325-362 (KTPIAFAPMTNGLCCTFFPHGGVIATGTRDGHVQFWTA). Positions 68–87 (AKSRSSKNETKGRGSPKEKT) are disordered. Positions 356-404 (HVQFWTAPRVLSSLKHLCRKALRSFLTTYQVLALPIPKKMKEFLTYRTF) constitute an SOCS box domain.

The protein operates within protein modification; protein ubiquitination. Its function is as follows. May be a substrate-recognition component of a SCF-like ECS (Elongin-Cullin-SOCS-box protein) E3 ubiquitin ligase complex which mediates the ubiquitination and subsequent proteasomal degradation of target proteins. The chain is WD repeat and SOCS box-containing protein 2 (WSB2) from Homo sapiens (Human).